A 661-amino-acid polypeptide reads, in one-letter code: Fusaric acid cluster transcription factor FUB12 (661 aa).

The segment at residues 17-48 (CVPCRTRKIKCNAAVVGLPCGSCVSRECPDEC) is a DNA-binding region (zn(2)-C6 fungal-type). Disordered regions lie at residues 57-131 (TVKG…RPPG) and 151-185 (SAAQ…QLDD). Residues 73–98 (PDTNGSILSPRQQQLPTNVSRQTTDS) show a composition bias toward polar residues. Residues 99–109 (SHSDPVEESIH) are compositionally biased toward basic and acidic residues. Positions 110 to 119 (ASHTGSSLRN) are enriched in polar residues. Residues 120–129 (DTPHSRDRRP) show a composition bias toward basic and acidic residues.

Its subcellular location is the nucleus. Functionally, transcription factor that is involved in the formation of the two Fusaric acid derivatives, dehydrofusaric acid and fusarinolic acid, serving as a detoxification mechanism. The sequence is that of Fusaric acid cluster transcription factor FUB12 from Gibberella fujikuroi (strain CBS 195.34 / IMI 58289 / NRRL A-6831) (Bakanae and foot rot disease fungus).